A 52-amino-acid chain; its full sequence is Large ribosomal subunit protein bL33 (52 aa).

It belongs to the bacterial ribosomal protein bL33 family.

The protein is Large ribosomal subunit protein bL33 of Helicobacter acinonychis (strain Sheeba).